Reading from the N-terminus, the 276-residue chain is 4-diphosphocytidyl-2-C-methyl-D-erythritol kinase (276 aa).

Residue lysine 13 is part of the active site. Residue 94–104 (PHAGGIGGGSA) coordinates ATP. Aspartate 131 is a catalytic residue.

It belongs to the GHMP kinase family. IspE subfamily.

It carries out the reaction 4-CDP-2-C-methyl-D-erythritol + ATP = 4-CDP-2-C-methyl-D-erythritol 2-phosphate + ADP + H(+). It functions in the pathway isoprenoid biosynthesis; isopentenyl diphosphate biosynthesis via DXP pathway; isopentenyl diphosphate from 1-deoxy-D-xylulose 5-phosphate: step 3/6. Its function is as follows. Catalyzes the phosphorylation of the position 2 hydroxy group of 4-diphosphocytidyl-2C-methyl-D-erythritol. The sequence is that of 4-diphosphocytidyl-2-C-methyl-D-erythritol kinase from Jannaschia sp. (strain CCS1).